Consider the following 288-residue polypeptide: HTH-type transcriptional regulator CzcR (288 aa).

The HTH lysR-type domain maps to 1 to 58; that stretch reads MELRDLQIFQSVADQGSVSSAAKELNYVQSNVTARIKQLENELKTPLFYRHKRGMTLT. Positions 18–37 form a DNA-binding region, H-T-H motif; it reads VSSAAKELNYVQSNVTARIK.

It belongs to the LysR transcriptional regulatory family.

The sequence is that of HTH-type transcriptional regulator CzcR (czcR) from Bacillus cereus (strain ATCC 10987 / NRS 248).